The sequence spans 571 residues: Proline--tRNA ligase (571 aa).

Belongs to the class-II aminoacyl-tRNA synthetase family. ProS type 1 subfamily. As to quaternary structure, homodimer.

It is found in the cytoplasm. It carries out the reaction tRNA(Pro) + L-proline + ATP = L-prolyl-tRNA(Pro) + AMP + diphosphate. In terms of biological role, catalyzes the attachment of proline to tRNA(Pro) in a two-step reaction: proline is first activated by ATP to form Pro-AMP and then transferred to the acceptor end of tRNA(Pro). As ProRS can inadvertently accommodate and process non-cognate amino acids such as alanine and cysteine, to avoid such errors it has two additional distinct editing activities against alanine. One activity is designated as 'pretransfer' editing and involves the tRNA(Pro)-independent hydrolysis of activated Ala-AMP. The other activity is designated 'posttransfer' editing and involves deacylation of mischarged Ala-tRNA(Pro). The misacylated Cys-tRNA(Pro) is not edited by ProRS. The protein is Proline--tRNA ligase of Thermodesulfovibrio yellowstonii (strain ATCC 51303 / DSM 11347 / YP87).